Here is a 190-residue protein sequence, read N- to C-terminus: GTP cyclohydrolase 1 (190 aa).

Zn(2+)-binding residues include cysteine 78, histidine 81, and cysteine 150.

The protein belongs to the GTP cyclohydrolase I family. Toroid-shaped homodecamer, composed of two pentamers of five dimers.

The enzyme catalyses GTP + H2O = 7,8-dihydroneopterin 3'-triphosphate + formate + H(+). The protein operates within cofactor biosynthesis; 7,8-dihydroneopterin triphosphate biosynthesis; 7,8-dihydroneopterin triphosphate from GTP: step 1/1. With respect to regulation, k(+) ions moderately increases the Vmax, whereas UTP and Ca(2+) and Mg(2+) ions drastically increase the Km for GTP. The polypeptide is GTP cyclohydrolase 1 (folE) (Bacillus subtilis (strain 168)).